The following is a 271-amino-acid chain: 4-hydroxy-tetrahydrodipicolinate reductase (271 aa).

NAD(+)-binding positions include 11–16 and Glu-37; that span reads GGSGRM. Arg-38 lines the NADP(+) pocket. NAD(+) is bound by residues 101–103 and 125–128; these read GTT and APNM. His-158 acts as the Proton donor/acceptor in catalysis. Residue His-159 participates in (S)-2,3,4,5-tetrahydrodipicolinate binding. Residue Lys-162 is the Proton donor of the active site. 168–169 provides a ligand contact to (S)-2,3,4,5-tetrahydrodipicolinate; sequence GT.

It belongs to the DapB family.

The protein resides in the cytoplasm. The enzyme catalyses (S)-2,3,4,5-tetrahydrodipicolinate + NAD(+) + H2O = (2S,4S)-4-hydroxy-2,3,4,5-tetrahydrodipicolinate + NADH + H(+). The catalysed reaction is (S)-2,3,4,5-tetrahydrodipicolinate + NADP(+) + H2O = (2S,4S)-4-hydroxy-2,3,4,5-tetrahydrodipicolinate + NADPH + H(+). It functions in the pathway amino-acid biosynthesis; L-lysine biosynthesis via DAP pathway; (S)-tetrahydrodipicolinate from L-aspartate: step 4/4. Catalyzes the conversion of 4-hydroxy-tetrahydrodipicolinate (HTPA) to tetrahydrodipicolinate. The sequence is that of 4-hydroxy-tetrahydrodipicolinate reductase from Shewanella piezotolerans (strain WP3 / JCM 13877).